The sequence spans 576 residues: 60 kDa heat shock protein homolog 2, mitochondrial (576 aa).

Residues 1-61 constitute a mitochondrion transit peptide; sequence MMRMFRYTNT…AVTMGPKGRN (61 aa).

It belongs to the chaperonin (HSP60) family. First detectable expression is seen in the posterior part of the dorsal tracheal trunk at stage 14-15, which marks the beginning of terminal tracheation. In the larval gut, expression in proventriculus is stronger than in midgut and hindgut. Malpighian tubules shows low expression and late third instar larval imaginal disks and brain showed moderate expression. In larval ovary and testis, expression is strong in the posterior region.

Its subcellular location is the mitochondrion matrix. In terms of biological role, prevents misfolding and promotes the refolding and proper assembly of unfolded polypeptides generated under stress conditions. Essential for proper development of trachea, spermatogonia and spermatocytes. The sequence is that of 60 kDa heat shock protein homolog 2, mitochondrial (Hsp60C) from Drosophila melanogaster (Fruit fly).